Reading from the N-terminus, the 145-residue chain is Large ribosomal subunit protein uL13 (145 aa).

This sequence belongs to the universal ribosomal protein uL13 family. As to quaternary structure, part of the 50S ribosomal subunit.

Its function is as follows. This protein is one of the early assembly proteins of the 50S ribosomal subunit, although it is not seen to bind rRNA by itself. It is important during the early stages of 50S assembly. The sequence is that of Large ribosomal subunit protein uL13 from Brevibacillus brevis (strain 47 / JCM 6285 / NBRC 100599).